Consider the following 292-residue polypeptide: CCR4-NOT transcription complex subunit 8 (292 aa).

A divalent metal cation contacts are provided by Asp40, Glu42, Asp161, and Asp230.

Belongs to the CAF1 family. In terms of assembly, component of the CCR4-NOT complex; distinct complexes seem to exist that differ in the participation of probably mutually exclusive catalytic subunits; the complex contains two deadenylase subunits, CNOT6 or CNOT6L, and CNOT7 or CNOT8. In the complex interacts directly with CNOT1. Interacts with BTG1, BTG2 and TOB1. Interacts with BTG4.

It localises to the cytoplasm. Its subcellular location is the nucleus. The catalysed reaction is Exonucleolytic cleavage of poly(A) to 5'-AMP.. Functionally, has 3'-5' poly(A) exoribonuclease activity for synthetic poly(A) RNA substrate. Its function seems to be partially redundant with that of CNOT7. Catalytic component of the CCR4-NOT complex which is linked to various cellular processes including bulk mRNA degradation, miRNA-mediated repression, translational repression during translational initiation and general transcription regulation. During miRNA-mediated repression the complex also seems to act as translational repressor during translational initiation. Additional complex functions may be a consequence of its influence on mRNA expression. Associates with members of the BTG family such as TOB1 and BTG2 and is required for their anti-proliferative activity. This is CCR4-NOT transcription complex subunit 8 (CNOT8) from Homo sapiens (Human).